A 310-amino-acid chain; its full sequence is Adenylyl-sulfate kinase 4, chloroplastic (310 aa).

The N-terminal 75 residues, 1–75, are a transit peptide targeting the chloroplast; the sequence is MDVAAMARCV…MAKDESISSR (75 aa). 116-124 serves as a coordination point for ATP; it reads GLSGSGKSS. Substrate contacts are provided by residues aspartate 146, arginine 149, arginine 163, asparagine 166, 189-190, and glycine 239; that span reads IS. The Phosphoserine intermediate role is filled by serine 190.

The protein belongs to the APS kinase family. In terms of assembly, homodimer; disulfide-linked. Expressed in root vasculature, root tips, leaf epidermal and guard cells, pollen grains and radicle of immature seeds.

It localises to the plastid. Its subcellular location is the chloroplast. The enzyme catalyses adenosine 5'-phosphosulfate + ATP = 3'-phosphoadenylyl sulfate + ADP + H(+). It participates in sulfur metabolism; hydrogen sulfide biosynthesis; sulfite from sulfate: step 2/3. Functionally, catalyzes the phosphorylation of adenosine 5'-phosphosulfate to 3'-phosphoadenylyl sulfate, which is the activated sulfate form for sulfation reactions. Essential for plant reproduction and viability. The chain is Adenylyl-sulfate kinase 4, chloroplastic (APK4) from Arabidopsis thaliana (Mouse-ear cress).